A 347-amino-acid chain; its full sequence is Quinolinate synthase (347 aa).

Iminosuccinate-binding residues include histidine 47 and serine 68. Cysteine 113 lines the [4Fe-4S] cluster pocket. Iminosuccinate is bound by residues 139–141 (YAN) and serine 156. Position 200 (cysteine 200) interacts with [4Fe-4S] cluster. Iminosuccinate is bound by residues 226-228 (HPE) and threonine 243. [4Fe-4S] cluster is bound at residue cysteine 297.

The protein belongs to the quinolinate synthase family. Type 1 subfamily. It depends on [4Fe-4S] cluster as a cofactor.

Its subcellular location is the cytoplasm. It catalyses the reaction iminosuccinate + dihydroxyacetone phosphate = quinolinate + phosphate + 2 H2O + H(+). It functions in the pathway cofactor biosynthesis; NAD(+) biosynthesis; quinolinate from iminoaspartate: step 1/1. Its function is as follows. Catalyzes the condensation of iminoaspartate with dihydroxyacetone phosphate to form quinolinate. The polypeptide is Quinolinate synthase (Escherichia fergusonii (strain ATCC 35469 / DSM 13698 / CCUG 18766 / IAM 14443 / JCM 21226 / LMG 7866 / NBRC 102419 / NCTC 12128 / CDC 0568-73)).